We begin with the raw amino-acid sequence, 868 residues long: MSIPSILKKDTNIDMQENNINDLVASASRVIAPLWPISTFAAHHPWMGLEKQSFEQVANWLKEARNVDIYPSASMIHSAKVKGEIEESFLQMSLSRWLDSQSFHIPREKAERFCQAALKLEKLPSSLLSSPEVNKLAEEMNYINTASMQASVMQPISSLIESQNSENLSDVLNYHIIKWCKLYLDESGSNWTMPNREKGFYRAWQHLITFDPALSKNERKVLKDWPQDAEVALARALFELGISESNIQSYLEGHLLSLPGWAGMIRWRSQQSIQEQELLIEYLAVRISMELAIVKPYLPLKNQKVEKKVSIVPLIASWIYWGNISTREWLQMPAAEQSELLVFAYRFDENIRKKLWLEAWEQTHAEQLREKIASTQRATNDKKRVLAQLAFCIDVRSEPFRRHLEKLGPFETFGIAGFFGLPIATSELGSNNNHSSLPVILKPKHQIKELTNENELKSYEQRKRVGSSVRSTFKTMKQNVMTSMALPELSGPLLGLQMVTRSFVPRGVGGFIRKLRKTMLQKPATTFSLNHVHDTKGEIPIGFTKEEKVNYVRQALKMVGLTEKFAPLVVMCGHSSQSTNNPYAAALECGACGGAAGGFNARVFATLCNLPEVREALFAEGIKIPEDTIFAAAEHKTTVDELEWIYVPELSETAQEAFDCIESIMPNVSQHANRERLTQLPNFKTKIKNASKEAHRFAEDWSEIRPEWGLARNASFIIGQRELTQDCDLEGRAFLHNYDWKQDESGDILANIIAGPGTVAQWINLQYYASTVAPHYYGSGNKTTQTVTAGLGVMQGNASDLLPGLPWQSVMQSDSETYHSPLRLLIVIQAPSQYIERLLNNDFTFREKVQNGWVRLASVDPKGRWKNW.

Zn(2+)-binding residues include C392, D394, H574, and C589.

The protein belongs to the inorganic carbon transporter (TC 9.A.2) DabA family. In terms of assembly, forms a complex with DabB. It depends on Zn(2+) as a cofactor.

The protein localises to the cell membrane. Functionally, part of an energy-coupled inorganic carbon pump. This Bacillus cereus (strain B4264) protein is Probable inorganic carbon transporter subunit DabA.